The chain runs to 108 residues: Protein SMALL AUXIN UP-REGULATED RNA 8 (108 aa).

It belongs to the ARG7 family. As to expression, expressed in seedlings, leaves and flowers.

It is found in the cell membrane. Provide a mechanistic link between auxin and plasma membrane H(+)-ATPases (PM H(+)-ATPases, e.g. AHA1 and AHA2), and triggers PM H(+)-ATPases activity by promoting phosphorylation of their C-terminal autoinhibitory domain as a result of PP2C-D subfamily of type 2C phosphatases inhibition, thus leading to the acidification of the apoplast and the facilitation of solutes and water uptake to drive cell expansion. Triggers plant growth probably by promoting cell elongation. Regulates branch angles and bending. The sequence is that of Protein SMALL AUXIN UP-REGULATED RNA 8 from Arabidopsis thaliana (Mouse-ear cress).